Here is a 343-residue protein sequence, read N- to C-terminus: Selenide, water dikinase (343 aa).

The active site involves C15. ATP contacts are provided by residues K18 and 46–48 (HKD). D49 contributes to the Mg(2+) binding site. ATP is bound by residues D66, D89, and 137–139 (GHS). D89 lines the Mg(2+) pocket. D225 contributes to the Mg(2+) binding site.

This sequence belongs to the selenophosphate synthase 1 family. Class I subfamily. As to quaternary structure, homodimer. Mg(2+) serves as cofactor.

It catalyses the reaction hydrogenselenide + ATP + H2O = selenophosphate + AMP + phosphate + 2 H(+). Functionally, synthesizes selenophosphate from selenide and ATP. This chain is Selenide, water dikinase, found in Sulfurimonas denitrificans (strain ATCC 33889 / DSM 1251) (Thiomicrospira denitrificans (strain ATCC 33889 / DSM 1251)).